The chain runs to 329 residues: Transmembrane protein I329L (329 aa).

The first 31 residues, methionine 1–glutamate 31, serve as a signal peptide directing secretion. Residues asparagine 32, asparagine 39, asparagine 44, asparagine 76, asparagine 82, and asparagine 101 are each glycosylated (N-linked (GlcNAc...) asparagine; by host). The Extracellular portion of the chain corresponds to asparagine 32–proline 239. The LRR repeat unit spans residues glutamate 112–lysine 133. N-linked (GlcNAc...) asparagine; by host glycans are attached at residues asparagine 185 and asparagine 219. Cysteine 195 and cysteine 237 are oxidised to a cystine. Residues leucine 240 to leucine 260 traverse the membrane as a helical segment. Residues arginine 261–lysine 329 lie on the Cytoplasmic side of the membrane.

The protein belongs to the asfivirus I329L family. Highly glycosylated.

It localises to the host endoplasmic reticulum membrane. It is found in the host Golgi apparatus membrane. Viral TLR3 homolog that probably prevents TLR3 dimerization and subsequent induction of IFN. Inhibits dsRNA-stimulated activation of NF-kB and IRF3. The protein is Transmembrane protein I329L of Ornithodoros (relapsing fever ticks).